Consider the following 504-residue polypeptide: ATP synthase subunit alpha (504 aa).

169-176 contributes to the ATP binding site; the sequence is GDRQTGKT.

Belongs to the ATPase alpha/beta chains family. As to quaternary structure, F-type ATPases have 2 components, CF(1) - the catalytic core - and CF(0) - the membrane proton channel. CF(1) has five subunits: alpha(3), beta(3), gamma(1), delta(1), epsilon(1). CF(0) has three main subunits: a(1), b(2) and c(9-12). The alpha and beta chains form an alternating ring which encloses part of the gamma chain. CF(1) is attached to CF(0) by a central stalk formed by the gamma and epsilon chains, while a peripheral stalk is formed by the delta and b chains.

It localises to the cell membrane. The enzyme catalyses ATP + H2O + 4 H(+)(in) = ADP + phosphate + 5 H(+)(out). In terms of biological role, produces ATP from ADP in the presence of a proton gradient across the membrane. The alpha chain is a regulatory subunit. This chain is ATP synthase subunit alpha, found in Clostridium botulinum (strain Eklund 17B / Type B).